Reading from the N-terminus, the 218-residue chain is GCN5-related N-acetyltransferase 9 (218 aa).

In terms of domain architecture, N-acetyltransferase spans 36–183 (SALLEATGSE…KEVTLEYPVT (148 aa)). Acetyl-CoA-binding positions include 112-114 (MIA), 120-125 (GKGLGK), 152-154 (NTA), and Phe159.

This sequence belongs to the acetyltransferase family. GNAT subfamily. In terms of assembly, oligomer. As to expression, expressed throughout the plant.

It localises to the cytoplasm. The protein resides in the nucleus. It carries out the reaction an N-terminal L-alpha-aminoacyl-[protein] + acetyl-CoA = N-terminal N(alpha)-acetyl-L-alpha-aminoacyl-[protein] + CoA + H(+). The enzyme catalyses L-lysyl-[protein] + acetyl-CoA = N(6)-acetyl-L-lysyl-[protein] + CoA + H(+). Its function is as follows. Probable protein acetyltransferase with dual specificity triggering both N-alpha-acetylation (NTA) and epsilon-lysine acetylation (KA). In Arabidopsis thaliana (Mouse-ear cress), this protein is GCN5-related N-acetyltransferase 9.